Reading from the N-terminus, the 495-residue chain is Serine/threonine-protein kinase STN8, chloroplastic (495 aa).

The transit peptide at 1 to 49 directs the protein to the chloroplast; that stretch reads MASLLSPATPTATSAAFHSCSTAGFSTPTHISSQNSSLSLLSRRGCMMR. The 345-residue stretch at 133–477 folds into the Protein kinase domain; that stretch reads FLVTEKLGEG…AAAALRHPYF (345 aa). ATP-binding positions include 139–147 and Lys186; that span reads LGEGSFGVV. Asp308 functions as the Proton acceptor in the catalytic mechanism.

This sequence belongs to the protein kinase superfamily. Ser/Thr protein kinase family.

Its subcellular location is the plastid. It is found in the chloroplast thylakoid. The enzyme catalyses L-seryl-[protein] + ATP = O-phospho-L-seryl-[protein] + ADP + H(+). It carries out the reaction L-threonyl-[protein] + ATP = O-phospho-L-threonyl-[protein] + ADP + H(+). Its function is as follows. Light-dependent serine/threonine protein kinase that specifically phosphorylates N-terminal threonine residues in psbA/D1, psbD/D2, psbC/CP43 and psbH, which are components of the core antenna complex of photosystem II. Phosphorylation of PSII core components facilitates the exchange of chlorophyll proteins between the grana and the stroma lamellae. Also involved in the phosphorylation of the calcium-sensing receptor (CaS). This is Serine/threonine-protein kinase STN8, chloroplastic (STN8) from Arabidopsis thaliana (Mouse-ear cress).